We begin with the raw amino-acid sequence, 356 residues long: Growth hormone-regulated TBC protein 1-A (356 aa).

Positions M1–S29 are disordered. Polar residues predominate over residues R9 to T22. Residues G87–G277 enclose the Rab-GAP TBC domain.

In terms of biological role, may act as a GTPase-activating protein for Rab family protein(s). This chain is Growth hormone-regulated TBC protein 1-A (grtp1a), found in Danio rerio (Zebrafish).